The chain runs to 113 residues: Replication initiation control protein YabA (113 aa).

Zn(2+) is bound by residues His-86, Cys-88, Cys-102, and Cys-105.

The protein belongs to the YabA family. In terms of assembly, homotetramer. Interacts with both DnaA and DnaN, acting as a bridge between these two proteins. It depends on Zn(2+) as a cofactor.

It localises to the cytoplasm. The protein localises to the nucleoid. Functionally, involved in control of chromosome replication initiation. Inhibits the cooperative binding of DnaA to the oriC region, thus negatively regulating initiation of chromosome replication. Inhibits the ability of DnaA-ATP to form a helix on DNA; does not disassemble preformed DnaA-DNA helices. Decreases the residence time of DnaA on the chromosome at its binding sites (oriC, replication forks and promoter-binding sites). Tethers DnaA to the replication machinery via the DNA polymerase beta sliding clamp subunit (dnaN). Associates with oriC and other DnaA targets on the chromosome in a DnaA-dependent manner. This chain is Replication initiation control protein YabA, found in Pediococcus pentosaceus (strain ATCC 25745 / CCUG 21536 / LMG 10740 / 183-1w).